Consider the following 470-residue polypeptide: Argininosuccinate lyase (470 aa).

The protein belongs to the lyase 1 family. Argininosuccinate lyase subfamily.

The protein resides in the cytoplasm. It carries out the reaction 2-(N(omega)-L-arginino)succinate = fumarate + L-arginine. The protein operates within amino-acid biosynthesis; L-arginine biosynthesis; L-arginine from L-ornithine and carbamoyl phosphate: step 3/3. This Bordetella avium (strain 197N) protein is Argininosuccinate lyase.